Here is a 166-residue protein sequence, read N- to C-terminus: Small ribosomal subunit protein uS5 (166 aa).

Positions 12 to 75 (YIEKLVQVNR…EAARRNMIQV (64 aa)) constitute an S5 DRBM domain.

Belongs to the universal ribosomal protein uS5 family. As to quaternary structure, part of the 30S ribosomal subunit. Contacts proteins S4 and S8.

In terms of biological role, with S4 and S12 plays an important role in translational accuracy. Located at the back of the 30S subunit body where it stabilizes the conformation of the head with respect to the body. The polypeptide is Small ribosomal subunit protein uS5 (Pseudomonas entomophila (strain L48)).